Consider the following 168-residue polypeptide: Large ribosomal subunit protein uL10 (168 aa).

This sequence belongs to the universal ribosomal protein uL10 family. As to quaternary structure, part of the ribosomal stalk of the 50S ribosomal subunit. The N-terminus interacts with L11 and the large rRNA to form the base of the stalk. The C-terminus forms an elongated spine to which L12 dimers bind in a sequential fashion forming a multimeric L10(L12)X complex.

Its function is as follows. Forms part of the ribosomal stalk, playing a central role in the interaction of the ribosome with GTP-bound translation factors. This is Large ribosomal subunit protein uL10 from Ralstonia pickettii (strain 12J).